Reading from the N-terminus, the 275-residue chain is Probable ribosomal RNA small subunit methyltransferase A (275 aa).

5 residues coordinate S-adenosyl-L-methionine: leucine 13, glycine 38, glutamate 59, aspartate 84, and asparagine 101.

Belongs to the class I-like SAM-binding methyltransferase superfamily. rRNA adenine N(6)-methyltransferase family. RsmA subfamily.

The protein resides in the cytoplasm. Its function is as follows. Specifically dimethylates two adjacent adenosines in the loop of a conserved hairpin near the 3'-end of 16S rRNA in the 30S particle. May play a critical role in biogenesis of 30S subunits. The polypeptide is Probable ribosomal RNA small subunit methyltransferase A (Methanocaldococcus jannaschii (strain ATCC 43067 / DSM 2661 / JAL-1 / JCM 10045 / NBRC 100440) (Methanococcus jannaschii)).